The chain runs to 659 residues: 3-hydroxypropionyl-coenzyme A synthetase (659 aa).

The active site involves aspartate 525. Residue lysine 616 is modified to N6-acetyllysine.

Belongs to the ATP-dependent AMP-binding enzyme family.

The catalysed reaction is 3-hydroxypropanoate + ATP + CoA = 3-hydroxypropanoyl-CoA + AMP + diphosphate. In terms of biological role, plays a role in the autotrophic CO(2) fixation pathway. Activates 3-hydroxypropionate to its CoA ester. Can also activate propionate, and to a lesser extent acrylate, acetate and butyrate. The protein is 3-hydroxypropionyl-coenzyme A synthetase of Sulfurisphaera tokodaii (strain DSM 16993 / JCM 10545 / NBRC 100140 / 7) (Sulfolobus tokodaii).